The sequence spans 253 residues: UPF0174 protein jhp_1494 (253 aa).

Belongs to the UPF0174 family.

This Helicobacter pylori (strain J99 / ATCC 700824) (Campylobacter pylori J99) protein is UPF0174 protein jhp_1494.